We begin with the raw amino-acid sequence, 379 residues long: F-box protein At5g18160 (379 aa).

The interval 1-26 (MDKQDEKKQGTTKSSSTLTTRCSHGN) is disordered. Positions 11–26 (TTKSSSTLTTRCSHGN) are enriched in polar residues. Residues 28 to 74 (ISQSNSIPLDITIEILSRLPAKSIVRSRSVSKLWSSITTTPEFIKHR) enclose the F-box domain.

This chain is F-box protein At5g18160, found in Arabidopsis thaliana (Mouse-ear cress).